A 573-amino-acid polypeptide reads, in one-letter code: METEHLKRLEAKEADHIPAILDEFNTKNADLLVFDSFRTDNLWHELWLAIFGILDDQRLSHLHTQCLNTVRILTRDEFSLQTNYIEQEVNTLLKLARIEAGSLKLPATPDELKQEEREEPQLEPSQAQSEVIAEALKCLCNLVYQSSDCRRQCLRQHCLDAILKRVASSMRHPCALEYYDMKLLFLLTALEPAARSRLQIDLNGLTYMTKWLDDKLGEDSVGEEQLNIICELLKVMFNVTSAPDKSPNEYEIQSLHLTGVLRELLLRFGDLATEKDRAVVTHAINLLTNISGSCLTELTLRCSNAELESHKEREQDNEKEKDTEAGAGAKPRECCSQCFEKRNVRSLDVLLRYLRQSLAQQEAEASSHELLSPVLTVLVKCARSDRVMRHYLRQEILPPLRDVSQRPEVGQELRNHLCRFLTLPAMILRDLSAELLFVLCKENVGRMIKYTGYGNAAGLFAKRGILDCRRVEGTDYSSDSEDSDTEEYKQQQQGINPVLGCVEPRSKSHLDDISEEQKEYEAMQLVNLIEQLRQGGIVKPAMIDKDGRPQPLEHILQLQEELPQQQLDQKRKT.

The span at 308–324 (ESHKEREQDNEKEKDTE) shows a compositional bias: basic and acidic residues. Disordered regions lie at residues 308–329 (ESHK…GAGA) and 473–493 (GTDY…QQQQ). 4 positions are modified to phosphoserine: Ser-477, Ser-478, Ser-480, and Ser-483.

It belongs to the synembryn family. In terms of assembly, interacts with GDP-bound G(i)-alpha protein G-i-alpha-65A. Does not interact with G-alpha proteins when they are in complex with subunits beta and gamma. Interacts with Frq2 in a Ca(2+)-independent manner but does not interact with Frq1. In terms of tissue distribution, expression in the embryo is primarily neural.

The protein localises to the cytoplasm. The protein resides in the cell cortex. It localises to the presynapse. In terms of biological role, chaperone that specifically binds and folds some, but not all, nascent G alpha proteins prior to G protein heterotrimer formation, promoting their stability and activity. Also acts as a guanine nucleotide exchange factor (GEF) for G alpha proteins by stimulating exchange of bound GDP for free GTP. Plays a key role in asymmetric spindle positioning, a step for asymmetric cell division that generates cell diversity during development by activating G(i) alpha protein independently of G-protein coupled receptors. Required during gastrulation and sensory organ precursor (SOP) formation. Plays a role in positively regulating synapse number and neurotransmitter release. This Drosophila melanogaster (Fruit fly) protein is Chaperone Ric-8 (ric8a).